The chain runs to 310 residues: Methionyl-tRNA formyltransferase (310 aa).

Residue 111–114 coordinates (6S)-5,6,7,8-tetrahydrofolate; sequence SILP.

Belongs to the Fmt family.

It carries out the reaction L-methionyl-tRNA(fMet) + (6R)-10-formyltetrahydrofolate = N-formyl-L-methionyl-tRNA(fMet) + (6S)-5,6,7,8-tetrahydrofolate + H(+). Functionally, attaches a formyl group to the free amino group of methionyl-tRNA(fMet). The formyl group appears to play a dual role in the initiator identity of N-formylmethionyl-tRNA by promoting its recognition by IF2 and preventing the misappropriation of this tRNA by the elongation apparatus. The protein is Methionyl-tRNA formyltransferase of Finegoldia magna (strain ATCC 29328 / DSM 20472 / WAL 2508) (Peptostreptococcus magnus).